Reading from the N-terminus, the 358-residue chain is D-xylulose reductase A (358 aa).

Cys-47, His-72, and Glu-73 together coordinate Zn(2+). Residue 182–187 (GAGPVG) coordinates NAD(+).

The protein belongs to the zinc-containing alcohol dehydrogenase family. Zn(2+) serves as cofactor.

It carries out the reaction xylitol + NAD(+) = D-xylulose + NADH + H(+). The protein operates within carbohydrate degradation; L-arabinose degradation via L-arabinitol; D-xylulose 5-phosphate from L-arabinose (fungal route): step 4/5. Its function is as follows. Xylitol dehydrogenase which catalyzes the conversion of xylitol to D-xylulose. Xylose is a major component of hemicelluloses such as xylan. Most fungi utilize D-xylose via three enzymatic reactions, xylose reductase (XR), xylitol dehydrogenase (XDH), and xylulokinase, to form xylulose 5-phosphate, which enters pentose phosphate pathway. In Aspergillus oryzae (strain ATCC 42149 / RIB 40) (Yellow koji mold), this protein is D-xylulose reductase A (xdhA).